Consider the following 204-residue polypeptide: MNNLLFVDASPHGSRSLGARIAREAIAQWQAAHPHARVVSRSLGQPGLPSISADYAHALVARQPDSDPALACSEQLIAEVEHSDGVLISTPMHNFTVPAALKLWIDFVLRIGRTFAATPEGKVGLLADRPVLVLVRSGGICRGAAARQPDFLTPYLKQVLAVIGFSTVDFIYLEGVAPDDAAIDAVRGQLAQSALLARRATETA.

An FMN-binding site is contributed by S10.

The protein belongs to the azoreductase type 1 family. Homodimer. FMN serves as cofactor.

It catalyses the reaction 2 a quinone + NADH + H(+) = 2 a 1,4-benzosemiquinone + NAD(+). The catalysed reaction is N,N-dimethyl-1,4-phenylenediamine + anthranilate + 2 NAD(+) = 2-(4-dimethylaminophenyl)diazenylbenzoate + 2 NADH + 2 H(+). Its function is as follows. Quinone reductase that provides resistance to thiol-specific stress caused by electrophilic quinones. In terms of biological role, also exhibits azoreductase activity. Catalyzes the reductive cleavage of the azo bond in aromatic azo compounds to the corresponding amines. The protein is FMN-dependent NADH:quinone oxidoreductase 5 of Burkholderia lata (strain ATCC 17760 / DSM 23089 / LMG 22485 / NCIMB 9086 / R18194 / 383).